Consider the following 1037-residue polypeptide: Glycine dehydrogenase (decarboxylating) A, mitochondrial (1037 aa).

A mitochondrion-targeting transit peptide spans M1 to T66. K773 is subject to N6-(pyridoxal phosphate)lysine.

It belongs to the GcvP family. Homodimer. The glycine cleavage system is composed of four proteins: P, T, L and H. The cofactor is pyridoxal 5'-phosphate. Expressed in leaves, stems and roots.

The protein resides in the mitochondrion. The catalysed reaction is N(6)-[(R)-lipoyl]-L-lysyl-[glycine-cleavage complex H protein] + glycine + H(+) = N(6)-[(R)-S(8)-aminomethyldihydrolipoyl]-L-lysyl-[glycine-cleavage complex H protein] + CO2. Its function is as follows. The glycine cleavage system catalyzes the degradation of glycine. The P protein binds the alpha-amino group of glycine through its pyridoxal phosphate cofactor; CO(2) is released and the remaining methylamine moiety is then transferred to the lipoamide cofactor of the H protein. This Flaveria pringlei protein is Glycine dehydrogenase (decarboxylating) A, mitochondrial (GDCSPA).